Consider the following 184-residue polypeptide: Cbp/p300-interacting transactivator 4 (184 aa).

A compositionally biased stretch (low complexity) spans 18–28 (PSAAAAHGPHA). Disordered stretches follow at residues 18–67 (PSAA…YGAF) and 94–128 (TPYP…PAHA). A compositionally biased stretch (pro residues) spans 104-126 (PNAPGGPPGPQPAPSAAAPPPPA).

The protein belongs to the CITED family. In terms of assembly, interacts via its C-terminal region with the CH1 domain of CREBBP and EP300. Interacts with all TFAP2/AP-2 isoforms. As to expression, expressed in most tissues examined with highest levels of expression in heart, liver, skeletal muscle and pancreas. Also expressed in bladder cell line ECV-304 and in various breast cancer cell lines. Also detected in both in situ and invasive breast tumors where its expression is down-regulated and mostly restricted to the cytoplasm of malignant epithelium. Down-regulation of expression is associated with elevated levels of HIF1A and increased tumor growth and angiogenesis.

It is found in the nucleus. It localises to the cytoplasm. In terms of biological role, acts as a transcriptional coactivator for TFAP2/AP-2. Enhances estrogen-dependent transactivation mediated by estrogen receptors. May function as an inhibitor of transactivation by HIF1A by disrupting HIF1A interaction with CREBBP. May be involved in regulation of gene expression during development and differentiation of blood cells, endothelial cells and mammary epithelial cells. The chain is Cbp/p300-interacting transactivator 4 from Homo sapiens (Human).